The following is a 122-amino-acid chain: UPF0102 protein Mpe_A3766 (122 aa).

The protein belongs to the UPF0102 family.

The polypeptide is UPF0102 protein Mpe_A3766 (Methylibium petroleiphilum (strain ATCC BAA-1232 / LMG 22953 / PM1)).